Here is a 100-residue protein sequence, read N- to C-terminus: uncharacterized protein (100 aa).

Residues 78 to 100 form a disordered region; sequence NNGNLDFKGRADERRQPVSNLRM. Positions 84-93 are enriched in basic and acidic residues; sequence FKGRADERRQ.

This is an uncharacterized protein from Saccharomyces cerevisiae (strain ATCC 204508 / S288c) (Baker's yeast).